Here is an 89-residue protein sequence, read N- to C-terminus: Small ribosomal subunit protein bS20 (89 aa).

Basic residues predominate over residues 1–12 (MANIKSAKKRAK). Residues 1 to 24 (MANIKSAKKRAKQTVVRNERNTGQ) are disordered.

It belongs to the bacterial ribosomal protein bS20 family.

In terms of biological role, binds directly to 16S ribosomal RNA. This chain is Small ribosomal subunit protein bS20, found in Xanthomonas campestris pv. campestris (strain 8004).